A 298-amino-acid polypeptide reads, in one-letter code: N-acetylmuramic acid 6-phosphate etherase (298 aa).

Positions 55 to 218 (IHAQVSGGGR…STGLMIKSGK (164 aa)) constitute an SIS domain. Glu83 serves as the catalytic Proton donor. The active site involves Glu114.

Belongs to the GCKR-like family. MurNAc-6-P etherase subfamily. Homodimer.

The catalysed reaction is N-acetyl-D-muramate 6-phosphate + H2O = N-acetyl-D-glucosamine 6-phosphate + (R)-lactate. The protein operates within amino-sugar metabolism; 1,6-anhydro-N-acetylmuramate degradation. It participates in amino-sugar metabolism; N-acetylmuramate degradation. It functions in the pathway cell wall biogenesis; peptidoglycan recycling. Specifically catalyzes the cleavage of the D-lactyl ether substituent of MurNAc 6-phosphate, producing GlcNAc 6-phosphate and D-lactate. Together with AnmK, is also required for the utilization of anhydro-N-acetylmuramic acid (anhMurNAc) either imported from the medium or derived from its own cell wall murein, and thus plays a role in cell wall recycling. The protein is N-acetylmuramic acid 6-phosphate etherase of Shigella flexneri serotype 5b (strain 8401).